We begin with the raw amino-acid sequence, 552 residues long: Tyrosine-protein kinase Src64B (552 aa).

One can recognise an SH3 domain in the interval 95–156 (VLKRVVVALY…PLNFVAEERS (62 aa)). Positions 162 to 259 (WFFENVLRKE…GLCHILSRPC (98 aa)) constitute an SH2 domain. The 254-residue stretch at 284-537 (IQLLRKLGRG…TFEFLNHYFE (254 aa)) folds into the Protein kinase domain. Residues 290–298 (LGRGNFGEV) and lysine 312 contribute to the ATP site. Residue aspartate 404 is the Proton acceptor of the active site. At tyrosine 434 the chain carries Phosphotyrosine; by autocatalysis.

It belongs to the protein kinase superfamily. Tyr protein kinase family. SRC subfamily. Interacts with hzg. Post-translationally, phosphorylated. In terms of tissue distribution, after the first 8 hours of development, accumulates almost exclusively in neural tissues such as the brain, ventral nerve chord, and eye-antennal disks, and in differentiating smooth muscle.

It carries out the reaction L-tyrosyl-[protein] + ATP = O-phospho-L-tyrosyl-[protein] + ADP + H(+). Functionally, tyrosine-protein kinase that may play a role in the development of neural tissue and smooth muscle. May contribute to tyrosine phosphorylation of Dscam1, a cell surface receptor involved in targeting of growing axons during eye morphogenesis. The chain is Tyrosine-protein kinase Src64B (Src64B) from Drosophila melanogaster (Fruit fly).